A 189-amino-acid polypeptide reads, in one-letter code: Adenylate kinase (189 aa).

Position 10-15 (10-15 (AAGKGT)) interacts with ATP. The segment at 30-59 (STGDMLRAARASGSELGQRVAKIMDEGGLV) is NMP. AMP contacts are provided by residues T31, R36, 57–59 (GLV), 85–88 (GFPR), and Q92. An LID region spans residues 126–136 (KRFEEQGRADD). R127 is an ATP binding site. Residues R133 and R144 each coordinate AMP. G172 contributes to the ATP binding site.

Belongs to the adenylate kinase family. Monomer.

The protein resides in the cytoplasm. The catalysed reaction is AMP + ATP = 2 ADP. It functions in the pathway purine metabolism; AMP biosynthesis via salvage pathway; AMP from ADP: step 1/1. Catalyzes the reversible transfer of the terminal phosphate group between ATP and AMP. Plays an important role in cellular energy homeostasis and in adenine nucleotide metabolism. This Hyphomonas neptunium (strain ATCC 15444) protein is Adenylate kinase.